Consider the following 120-residue polypeptide: UPF0102 protein CBU_1742 (120 aa).

The protein belongs to the UPF0102 family.

The sequence is that of UPF0102 protein CBU_1742 from Coxiella burnetii (strain RSA 493 / Nine Mile phase I).